Here is a 144-residue protein sequence, read N- to C-terminus: Large ribosomal subunit protein uL15 (144 aa).

Residues 1 to 13 (MKLNELKPAEGSR) show a composition bias toward basic and acidic residues. The tract at residues 1–47 (MKLNELKPAEGSRKVRNRVGRGDSSGNGKTAGRGQKGQKARSKTRLG) is disordered. The span at 23 to 35 (DSSGNGKTAGRGQ) shows a compositional bias: gly residues.

Belongs to the universal ribosomal protein uL15 family. In terms of assembly, part of the 50S ribosomal subunit.

Functionally, binds to the 23S rRNA. This is Large ribosomal subunit protein uL15 from Levilactobacillus brevis (strain ATCC 367 / BCRC 12310 / CIP 105137 / JCM 1170 / LMG 11437 / NCIMB 947 / NCTC 947) (Lactobacillus brevis).